Consider the following 293-residue polypeptide: DegV domain-containing protein MG326 homolog (293 aa).

The region spanning 3–289 is the DegV domain; the sequence is TAIITDSTAS…IDAFSISLLL (287 aa). Hexadecanoate contacts are provided by Thr62 and Ser94.

Its function is as follows. May bind long-chain fatty acids, such as palmitate, and may play a role in lipid transport or fatty acid metabolism. The polypeptide is DegV domain-containing protein MG326 homolog (Mycoplasma pneumoniae (strain ATCC 29342 / M129 / Subtype 1) (Mycoplasmoides pneumoniae)).